The sequence spans 217 residues: Biotin transport regulator (217 aa).

Residues 14–49 (GDGLGNLAGRSADPTGAADKGESGVPVPPTGFVDPT) are disordered.

Functionally, may be part of a system that R.meliloti uses to respond to plant (alfalfa) biotin signals. The polypeptide is Biotin transport regulator (bioS) (Rhizobium meliloti (strain 1021) (Ensifer meliloti)).